Consider the following 218-residue polypeptide: MSHGDTIRVDASVRAKCGTGSARALRAAGLIPAVVYGKNRDAVNISLSHADFLKKCRTLPIFSQLIKLCIDGKEEFALTKEIQKHPVSGAVSHVDFQFVDRGAEIKVEVPLVFLNEQKCAGVKLGGALNILHRSLLIRCAPDAIPQSLEVDLLDLAIGHSIHVSDLALPETMQVAMKEENPVVASVSATAAVEEAKEDGAPEESAQGQGAAEAQETGK.

Positions 187 to 218 (SATAAVEEAKEDGAPEESAQGQGAAEAQETGK) are disordered. A compositionally biased stretch (low complexity) spans 202–218 (EESAQGQGAAEAQETGK).

The protein belongs to the bacterial ribosomal protein bL25 family. CTC subfamily. As to quaternary structure, part of the 50S ribosomal subunit; part of the 5S rRNA/L5/L18/L25 subcomplex. Contacts the 5S rRNA. Binds to the 5S rRNA independently of L5 and L18.

Its function is as follows. This is one of the proteins that binds to the 5S RNA in the ribosome where it forms part of the central protuberance. The protein is Large ribosomal subunit protein bL25 of Anaplasma marginale (strain Florida).